Consider the following 271-residue polypeptide: Monalysin (271 aa).

Positions 1–33 (MTIKEELGQPQSHSIELDEVSKEAASTRAALTS) are excised as a propeptide. The interval 102–170 (IPQNVTTTLS…FTDTTEMKGP (69 aa)) is pore-forming domain.

Pro-Monalysin forms a stable donut-like 18-mer complex composed of two disk-shaped nonamers held together by N-terminal swapping of the pro-peptides. After proteolytic cleavage, the inactive 18-mer complex probably dissociates into two disk-shaped active nonamers in which the transmembrane segments are unmasked and ready to engage the conformational change leading to the pore formation into the target membrane. Multimerizes into circular-like structures and barrel-like aggregates. Requires N-terminal cleavage to become fully active. The metalloprotease AprA can induce the rapid cleavage of pro-Monalysin into its active form. Can also be processed by trypsin.

It is found in the secreted. It localises to the host cell membrane. In terms of biological role, pore-forming toxin that contributes to the virulence of P.entomophila against Drosophila, playing an important role in host intestinal damage and lethality. Displays cytolytic and hemolytic activity. The sequence is that of Monalysin from Pseudomonas entomophila (strain L48).